The chain runs to 581 residues: Semenogelin-2 (581 aa).

The N-terminal stretch at 1–23 (MKSIILFVLSLLLILEKQAAVMG) is a signal peptide. Disordered regions lie at residues 24–62 (QKGG…SKGS), 132–157 (GGKA…GISS), 173–194 (KEQA…QSSY), and 271–581 (NLNQ…PIST). Composition is skewed to polar residues over residues 138-157 (GTQN…GISS) and 174-194 (EQAS…QSSY). Positions 291 to 310 (HTEERQLNHGEKSVQKDISK) are enriched in basic and acidic residues. Positions 324 to 333 (KSQNQVTIHS) are enriched in polar residues. Basic and acidic residues predominate over residues 334–344 (QDQEHGHKENK). Polar residues predominate over residues 366 to 396 (KSVSKGSISIQTEEQIHGKSQNQVRIPSQAQ). Basic and acidic residues-rich tracts occupy residues 412 to 425 (TEER…KDIQ) and 455 to 464 (DQEHGHKENK). Polar residues-rich tracts occupy residues 481 to 497 (GKNT…SFQT) and 505 to 529 (SQIQ…SGQS). 2 stretches are compositionally biased toward basic and acidic residues: residues 530–545 (ADRE…KGRY) and 558–581 (TEHE…PIST).

The protein belongs to the semenogelin family. Interacts with SERPINA5.

The protein resides in the secreted. Functionally, participates in the formation of a gel matrix (sperm coagulum) entrapping the accessory gland secretions and ejaculated spermatozoa. In Pongo abelii (Sumatran orangutan), this protein is Semenogelin-2 (SEMG2).